Reading from the N-terminus, the 375-residue chain is Chaperone protein DnaJ (375 aa).

A J domain is found at 5–69 (DYYEILGIDK…QKRAQYDQFG (65 aa)). The segment at 131-213 (GKETDIEIPK…CGGSGTVQKN (83 aa)) adopts a CR-type zinc-finger fold. Residues C144, C147, C161, C164, C187, C190, C201, and C204 each coordinate Zn(2+). CXXCXGXG motif repeat units follow at residues 144-151 (CDTCNGSG), 161-168 (CSHCHGSG), 187-194 (CNYCQGTG), and 201-208 (CNTCGGSG).

It belongs to the DnaJ family. Homodimer. Requires Zn(2+) as cofactor.

It is found in the cytoplasm. Functionally, participates actively in the response to hyperosmotic and heat shock by preventing the aggregation of stress-denatured proteins and by disaggregating proteins, also in an autonomous, DnaK-independent fashion. Unfolded proteins bind initially to DnaJ; upon interaction with the DnaJ-bound protein, DnaK hydrolyzes its bound ATP, resulting in the formation of a stable complex. GrpE releases ADP from DnaK; ATP binding to DnaK triggers the release of the substrate protein, thus completing the reaction cycle. Several rounds of ATP-dependent interactions between DnaJ, DnaK and GrpE are required for fully efficient folding. Also involved, together with DnaK and GrpE, in the DNA replication of plasmids through activation of initiation proteins. In Oceanobacillus iheyensis (strain DSM 14371 / CIP 107618 / JCM 11309 / KCTC 3954 / HTE831), this protein is Chaperone protein DnaJ.